We begin with the raw amino-acid sequence, 574 residues long: Arginine--tRNA ligase (574 aa).

Positions 121 to 131 (PNIAKEMHIGH) match the 'HIGH' region motif.

Belongs to the class-I aminoacyl-tRNA synthetase family. As to quaternary structure, monomer.

It is found in the cytoplasm. It catalyses the reaction tRNA(Arg) + L-arginine + ATP = L-arginyl-tRNA(Arg) + AMP + diphosphate. The protein is Arginine--tRNA ligase of Buchnera aphidicola subsp. Acyrthosiphon pisum (strain 5A).